We begin with the raw amino-acid sequence, 261 residues long: Segregation and condensation protein A (261 aa).

This sequence belongs to the ScpA family. In terms of assembly, component of a cohesin-like complex composed of ScpA, ScpB and the Smc homodimer, in which ScpA and ScpB bind to the head domain of Smc. The presence of the three proteins is required for the association of the complex with DNA.

It is found in the cytoplasm. Functionally, participates in chromosomal partition during cell division. May act via the formation of a condensin-like complex containing Smc and ScpB that pull DNA away from mid-cell into both cell halves. This chain is Segregation and condensation protein A, found in Desulfitobacterium hafniense (strain DSM 10664 / DCB-2).